The chain runs to 60 residues: Large ribosomal subunit protein bL32 (60 aa).

Belongs to the bacterial ribosomal protein bL32 family.

The chain is Large ribosomal subunit protein bL32 (rpmF) from Borreliella burgdorferi (strain ATCC 35210 / DSM 4680 / CIP 102532 / B31) (Borrelia burgdorferi).